Consider the following 878-residue polypeptide: von Willebrand factor A domain-containing protein DDB_G0267758 (878 aa).

The 134-residue stretch at 36–169 folds into the VIT domain; the sequence is GLFLTENNKK…TVKITLTITS (134 aa). The VWFA domain occupies 316–496; sequence EFIFLIDCSG…ISLKPMFSNI (181 aa). The span at 595–623 shows a compositional bias: low complexity; the sequence is SSSSSSSSSSSSSSSSSSSSSSSSSSSSS. Disordered regions lie at residues 595 to 638 and 752 to 774; these read SSSS…HRLS and SVKKSKKSETKEETTKTTSSKTK. Polar residues predominate over residues 624–635; the sequence is TTTATTNQNQIH.

This Dictyostelium discoideum (Social amoeba) protein is von Willebrand factor A domain-containing protein DDB_G0267758.